A 388-amino-acid polypeptide reads, in one-letter code: Staphopain A (388 aa).

The signal sequence occupies residues 1 to 25; it reads MKRNFPKLIALSLIFSLSVTPIANA. Positions 26–214 are excised as a propeptide; that stretch reads ESNSNIKAKD…TSQFKSNNYT (189 aa). Active-site residues include Cys238, His334, and Asn355.

It belongs to the peptidase C47 family. As to quaternary structure, in the cytoplasm, prematurely activated/folded ScpA forms a stable non-covalent complex with ScpB. In terms of processing, cleavage leads to the activation of ScpA probably by an auto-catalytic manner.

The protein resides in the secreted. It carries out the reaction Broad endopeptidase action on proteins including elastin, but rather limited hydrolysis of small-molecule substrates. Assays are conveniently made with hemoglobin, casein or Z-Phe-Arg-NHMec as substrate.. Prematurely activated/folded staphopain A is inhibited by staphostatin A (ScpB), which is probably required to protect staphylococcal cytoplasmic proteins from degradation by ScpA. Its function is as follows. Cysteine protease that plays an important role in the inhibition of host innate immune response. Cleaves host elastins found in connective tissues, pulmonary surfactant protein A in the lungs, and the chemokine receptor CXCR2 on leukocytes. Proteolytic cleavage of surfactant protein A impairs bacterial phagocytosis by neutrophils while CXCR2 degradation blocks neutrophil activation and chemotaxis. Additionally, promotes vascular leakage by activating the plasma kallikerin/kinin system, resulting in hypotension. This is Staphopain A (sspP) from Staphylococcus aureus (strain Mu50 / ATCC 700699).